We begin with the raw amino-acid sequence, 212 residues long: Amelotin (212 aa).

Positions 1–16 (MKTVVLLLCLLGSAQS) are cleaved as a signal peptide. Disordered regions lie at residues 23 to 42 (PALG…PLTQ) and 141 to 212 (PSGQ…NRTK). 2 stretches are compositionally biased toward polar residues: residues 33-42 (TPGQVTPLTQ) and 165-178 (PANQ…TTPA).

The protein belongs to the amelotin family. Post-translationally, O-glycosylated. Phosphorylated by FAM20C in vitro. In terms of tissue distribution, highest expression in the mandible. Found in the basal lamina of maturation stage ameloblasts of incisors and unerupted molars. Also found in the internal basal lamina of junctional epithelium in molars.

The protein resides in the secreted. Is a promoter of calcium phosphate mineralization, playing a critical role in the formation of the compact, mineralized, aprismatic enamel surface layer during the maturation stage of amelogenesis. The chain is Amelotin from Rattus norvegicus (Rat).